The sequence spans 144 residues: Bacilliredoxin BrxA (144 aa).

Catalysis depends on nucleophile residues cysteine 53 and cysteine 55. An S-bacillithiol cysteine disulfide modification is found at cysteine 53. The short motif at 53 to 55 (CGC) is the CXC active site motif element. Cysteine 53 and cysteine 55 are disulfide-bonded.

It belongs to the bacilliredoxin family. In terms of processing, N-terminal Cys of the CXC active site motif can react with bacillithiol (BSH) to form mixed disulfides. S-bacillithiolation protects Cys residues against overoxidation by acting as a redox switch in response to oxidative stress.

S-bacillithiolation is the formation of mixed disulfide bonds between protein thiols and the general thiol reductant bacillithiol (BSH) under oxidative stress. BSH is an equivalent of glutathione (GSH) in Firmicutes. This protein is a dithiol bacilliredoxin, which debacillithiolates (removes BSH) the S-bacillithiolated OhrR (OhrR-SSB) in vitro and in vivo NaOCl-generated S-bacillithiolated MetE (MetE-SSB). Involved in maintaining redox homeostasis in response to disulfide stress conditions. Has a redox potential of -130 mV. Displays weak protein disulfide isomerase activity in vitro. In Bacillus subtilis (strain 168), this protein is Bacilliredoxin BrxA.